The following is a 505-amino-acid chain: Tubby protein homolog (505 aa).

The tract at residues 35–243 is disordered; sequence EQKQKKKRQE…PSPAAPEPPV (209 aa). The segment covering 70-87 has biased composition (low complexity); sequence LVESYLSSSGSTSYQVQE. The segment covering 196-205 has biased composition (acidic residues); the sequence is FDEEEDEDEN. The segment covering 206-220 has biased composition (low complexity); the sequence is SSSSSQLNSNTRPSS.

This sequence belongs to the TUB family. As to quaternary structure, interacts with GNAQ. Interacts with TULP1.

The protein localises to the cytoplasm. Its subcellular location is the nucleus. It is found in the secreted. It localises to the cell membrane. Functions in signal transduction from heterotrimeric G protein-coupled receptors. Binds to membranes containing phosphatidylinositol 4,5-bisphosphate. Can bind DNA (in vitro). May contribute to the regulation of transcription in the nucleus. Could be involved in the hypothalamic regulation of body weight. Contribute to stimulation of phagocytosis of apoptotic retinal pigment epithelium (RPE) cells and macrophages. The polypeptide is Tubby protein homolog (Tub) (Rattus norvegicus (Rat)).